A 197-amino-acid chain; its full sequence is NADH-quinone oxidoreductase subunit B (197 aa).

Positions 76, 77, 141, and 171 each coordinate [4Fe-4S] cluster.

Belongs to the complex I 20 kDa subunit family. As to quaternary structure, NDH-1 is composed of 14 different subunits. Subunits NuoB, C, D, E, F, and G constitute the peripheral sector of the complex. [4Fe-4S] cluster is required as a cofactor.

It is found in the cell inner membrane. It carries out the reaction a quinone + NADH + 5 H(+)(in) = a quinol + NAD(+) + 4 H(+)(out). NDH-1 shuttles electrons from NADH, via FMN and iron-sulfur (Fe-S) centers, to quinones in the respiratory chain. The immediate electron acceptor for the enzyme in this species is believed to be ubiquinone. Couples the redox reaction to proton translocation (for every two electrons transferred, four hydrogen ions are translocated across the cytoplasmic membrane), and thus conserves the redox energy in a proton gradient. This chain is NADH-quinone oxidoreductase subunit B, found in Methylobacterium nodulans (strain LMG 21967 / CNCM I-2342 / ORS 2060).